The chain runs to 145 residues: Actin-depolymerizing factor 2 (145 aa).

One can recognise an ADF-H domain in the interval 13 to 145 (GMGVAPDIRD…DLEVLRERAH (133 aa)).

The protein belongs to the actin-binding proteins ADF family.

Its function is as follows. Actin-depolymerizing protein. Severs actin filaments (F-actin) and binds to actin monomers. In Oryza sativa subsp. japonica (Rice), this protein is Actin-depolymerizing factor 2 (ADF2).